Consider the following 160-residue polypeptide: 2-C-methyl-D-erythritol 2,4-cyclodiphosphate synthase (160 aa).

The a divalent metal cation site is built by Asp11 and His13. 4-CDP-2-C-methyl-D-erythritol 2-phosphate-binding positions include 11–13 (DVH) and 37–38 (HS). Residue His45 participates in a divalent metal cation binding. Residues 59 to 61 (DIG), 64 to 68 (FPDTD), 103 to 109 (AQAPKMA), 135 to 138 (TTTE), Phe142, and Arg145 contribute to the 4-CDP-2-C-methyl-D-erythritol 2-phosphate site.

It belongs to the IspF family. Homotrimer. It depends on a divalent metal cation as a cofactor.

It carries out the reaction 4-CDP-2-C-methyl-D-erythritol 2-phosphate = 2-C-methyl-D-erythritol 2,4-cyclic diphosphate + CMP. It participates in isoprenoid biosynthesis; isopentenyl diphosphate biosynthesis via DXP pathway; isopentenyl diphosphate from 1-deoxy-D-xylulose 5-phosphate: step 4/6. Functionally, involved in the biosynthesis of isopentenyl diphosphate (IPP) and dimethylallyl diphosphate (DMAPP), two major building blocks of isoprenoid compounds. Catalyzes the conversion of 4-diphosphocytidyl-2-C-methyl-D-erythritol 2-phosphate (CDP-ME2P) to 2-C-methyl-D-erythritol 2,4-cyclodiphosphate (ME-CPP) with a corresponding release of cytidine 5-monophosphate (CMP). This Thiobacillus denitrificans (strain ATCC 25259 / T1) protein is 2-C-methyl-D-erythritol 2,4-cyclodiphosphate synthase.